A 593-amino-acid polypeptide reads, in one-letter code: DNA primase (593 aa).

The CHC2-type zinc finger occupies 40–64; the sequence is CPFHHEKTPSFTVSQKKQFYHCFGC. The region spanning 260–342 is the Toprim domain; sequence KQLLVVEGYM…GRQLKFIFLP (83 aa). Mg(2+) is bound by residues Glu266, Asp310, and Asp312.

Belongs to the DnaG primase family. As to quaternary structure, monomer. Interacts with DnaB. Zn(2+) is required as a cofactor. It depends on Mg(2+) as a cofactor.

The enzyme catalyses ssDNA + n NTP = ssDNA/pppN(pN)n-1 hybrid + (n-1) diphosphate.. In terms of biological role, RNA polymerase that catalyzes the synthesis of short RNA molecules used as primers for DNA polymerase during DNA replication. The chain is DNA primase from Haemophilus influenzae (strain ATCC 51907 / DSM 11121 / KW20 / Rd).